The sequence spans 297 residues: MIPLSIRVPASTANVGPGFDSVGIALSLYLHVVVKEKSDKWQVIHSFEDSIPTDDKNLIVSTACKVCPSLSPHIIEVTSNIPLTRGLGSSASAIVAGIELANQLGKLNLTTDQKVQIATNFEGHPDNVAASILGGTVIGALDGKNVSVVRIESKELGVISLIPNEELNTDESRSVLPDVFPFHEAVKASAISNVLVAALCQKKWEVVGEMMERDHFHEPYRLELIPLLPSIRKCAKEFGAYGTALSGAGPSIFILTPYEKRQEIAEQLARVFTSMKVCELEIDHRGITVNKKEHIGL.

Position 82-92 (82-92 (PLTRGLGSSAS)) interacts with ATP.

This sequence belongs to the GHMP kinase family. Homoserine kinase subfamily.

It localises to the cytoplasm. It catalyses the reaction L-homoserine + ATP = O-phospho-L-homoserine + ADP + H(+). Its pathway is amino-acid biosynthesis; L-threonine biosynthesis; L-threonine from L-aspartate: step 4/5. In terms of biological role, catalyzes the ATP-dependent phosphorylation of L-homoserine to L-homoserine phosphate. In Bacillus cereus (strain ZK / E33L), this protein is Homoserine kinase.